A 177-amino-acid polypeptide reads, in one-letter code: Transcription antitermination protein NusB (177 aa).

The segment at 1 to 35 (MTDSTHPTPSARPPRQPRTGTTGTGARKAGSKSGR) is disordered. Positions 17–28 (PRTGTTGTGARK) are enriched in low complexity.

It belongs to the NusB family.

Its function is as follows. Involved in transcription antitermination. Required for transcription of ribosomal RNA (rRNA) genes. Binds specifically to the boxA antiterminator sequence of the ribosomal RNA (rrn) operons. In Acidovorax sp. (strain JS42), this protein is Transcription antitermination protein NusB.